The following is a 100-amino-acid chain: Small ribosomal subunit protein uS14c (100 aa).

It belongs to the universal ribosomal protein uS14 family. In terms of assembly, part of the 30S ribosomal subunit.

Its subcellular location is the plastid. The protein resides in the chloroplast. Functionally, binds 16S rRNA, required for the assembly of 30S particles. The polypeptide is Small ribosomal subunit protein uS14c (Mesostigma viride (Green alga)).